The sequence spans 354 residues: DnaJ homolog shv (354 aa).

An N-terminal signal peptide occupies residues 1 to 22 (MQLIKCLVIIQLSLLLVEESFA). The J domain occupies 25-90 (DFYKILNVKK…DKRKTYDRCG (66 aa)). N-linked (GlcNAc...) asparagine glycans are attached at residues Asn260 and Asn312.

As to expression, in the testes, detected at low levels in somatic hub cells, cyst stem cells and the apical tip (at protein level). Levels in the testes decrease with age (at protein level). Expressed at low levels in hub cells, cyst stem cells and germline stem cells, and at high levels in spermatocytes and cyst cells.

The protein localises to the nucleus. Its subcellular location is the cell membrane. The protein resides in the secreted. Functionally, maintains stem cell niche architecture in the testes. Activates an extracellular integrin beta-PS pathway which regulates DE-cadherin (shg) levels in somatic hub cells, and is essential for maintaining the number of germline stem cells and the structure and localization of hub cells. In Drosophila melanogaster (Fruit fly), this protein is DnaJ homolog shv.